We begin with the raw amino-acid sequence, 132 residues long: uncharacterized protein (132 aa).

WD repeat units lie at residues 14-53 (DLQD…LEIL) and 58-97 (AHDD…LANV).

This is an uncharacterized protein from Acanthamoeba polyphaga (Amoeba).